The chain runs to 104 residues: MSTYAIIKTGGKQVKVEVDQAIYVEKLDVEAGAEVTFDQVVLVGGDKTVVGTPIVQGATVVGTVEKQGKQKKVVTYKYKPKKGSHRKQGHRQPYTKVVIKAINA.

This sequence belongs to the bacterial ribosomal protein bL21 family. Part of the 50S ribosomal subunit. Contacts protein L20.

This protein binds to 23S rRNA in the presence of protein L20. This is Large ribosomal subunit protein bL21 from Streptococcus mutans serotype c (strain ATCC 700610 / UA159).